The sequence spans 230 residues: Leucyl/phenylalanyl-tRNA--protein transferase (230 aa).

The protein belongs to the L/F-transferase family.

Its subcellular location is the cytoplasm. It carries out the reaction N-terminal L-lysyl-[protein] + L-leucyl-tRNA(Leu) = N-terminal L-leucyl-L-lysyl-[protein] + tRNA(Leu) + H(+). The enzyme catalyses N-terminal L-arginyl-[protein] + L-leucyl-tRNA(Leu) = N-terminal L-leucyl-L-arginyl-[protein] + tRNA(Leu) + H(+). It catalyses the reaction L-phenylalanyl-tRNA(Phe) + an N-terminal L-alpha-aminoacyl-[protein] = an N-terminal L-phenylalanyl-L-alpha-aminoacyl-[protein] + tRNA(Phe). In terms of biological role, functions in the N-end rule pathway of protein degradation where it conjugates Leu, Phe and, less efficiently, Met from aminoacyl-tRNAs to the N-termini of proteins containing an N-terminal arginine or lysine. In Hamiltonella defensa subsp. Acyrthosiphon pisum (strain 5AT), this protein is Leucyl/phenylalanyl-tRNA--protein transferase.